Reading from the N-terminus, the 457-residue chain is MEGGTNDGAAVPGNGAGTAGSIFWWLKNRCLGRGLCVDPARDNFRTMTSLYSSIHPADSVNLSTRTHGAVFNLEYSPDGSVLTVACEQTEVLLFDPVSSKHIKTLSEAHEDCVNNIRFLDNRMFATCSDDTTIALWDLRKLNSKVCTLHGHTSWVKNIEYDTNTRLLVTSGFDGNVIIWDTNRCTEDGCPHKKFFHTRFLMRMRLTPDCSKMLISTSSGYLLILHELDLTKSLEVGSYPILRARRTASTSDMTSTSSDTRPSSSPCHNSDLGPLFEKHMSRSSQREGASPRNSLEVLTPEVPGERDRGNCITSLQLHPKGWATLLRCSSNTDDQEWTCVYEFQEGAPVRQVSPRCSLRLTHYIEEANVGRGYIKELCFSPDGRMIASPYAYGIRLLGFDSQCKELVDCLPKEAGTLQVIRSLYSHKDVVLTTKFSPTHCQIASGCLSGRVTLYQPKF.

WD repeat units follow at residues 65–104 (RTHG…HIKT), 108–146 (AHED…SKVC), 150–189 (GHTS…EDGC), and 195–234 (FHTR…KSLE). A compositionally biased stretch (low complexity) spans 246–265 (TASTSDMTSTSSDTRPSSSP). The disordered stretch occupies residues 246–304 (TASTSDMTSTSSDTRPSSSPCHNSDLGPLFEKHMSRSSQREGASPRNSLEVLTPEVPGE). Residues 281 to 292 (RSSQREGASPRN) are compositionally biased toward polar residues. 3 WD repeats span residues 306-346 (DRGN…QEGA), 368-406 (VGRG…KELV), and 424-457 (SHKD…QPKF).

The protein belongs to the WD repeat DCAF10 family.

The protein operates within protein modification; protein ubiquitination. Functionally, may function as a substrate receptor for CUL4-DDB1 E3 ubiquitin-protein ligase complex. The polypeptide is DDB1- and CUL4-associated factor 10 (dcaf10) (Xenopus tropicalis (Western clawed frog)).